Consider the following 372-residue polypeptide: Alanine dehydrogenase 2 (372 aa).

The active site involves His95. 169-199 (KVTIIGGGQAGTNAAKIALGLGADVTILDVN) lines the NAD(+) pocket.

This sequence belongs to the AlaDH/PNT family.

It catalyses the reaction L-alanine + NAD(+) + H2O = pyruvate + NH4(+) + NADH + H(+). It functions in the pathway amino-acid degradation; L-alanine degradation via dehydrogenase pathway; NH(3) and pyruvate from L-alanine: step 1/1. May play a role in cell wall synthesis as L-alanine is an important constituent of the peptidoglycan layer. The protein is Alanine dehydrogenase 2 (ald2) of Staphylococcus aureus (strain MRSA252).